We begin with the raw amino-acid sequence, 347 residues long: Extracellular metalloprotease (347 aa).

An N-terminal signal peptide occupies residues 1–20; it reads MKSRPICSVIPPYILHRIIA. The interval 43 to 68 is disordered; sequence SHHPRPEPHEKLPAGQANRSIHDAEQ. His-162 serves as a coordination point for Zn(2+). Glu-163 is an active-site residue. Residues His-166 and Glu-186 each contribute to the Zn(2+) site. His-264 functions as the Proton donor in the catalytic mechanism.

It belongs to the peptidase M4 family. Ca(2+) serves as cofactor. Zn(2+) is required as a cofactor.

The protein localises to the secreted. The polypeptide is Extracellular metalloprotease (prt1) (Pectobacterium carotovorum subsp. carotovorum (Erwinia carotovora subsp. carotovora)).